A 249-amino-acid polypeptide reads, in one-letter code: Putative SAP domain-containing protein 049L (249 aa).

Composition is skewed to basic and acidic residues over residues 1 to 12, 22 to 38, and 95 to 107; these read MAAPKAEGEDKP, PKPE…KEFC, and KKAE…KLDE. A disordered region spans residues 1 to 110; the sequence is MAAPKAEGED…DDKKLDEATG (110 aa). The SAP domain maps to 119–153; the sequence is LSKLTIQTLKGMCKTRNLKISGNKAALVQRLIEAD.

This is Putative SAP domain-containing protein 049L from Frog virus 3 (isolate Goorha) (FV-3).